The following is a 341-amino-acid chain: Probable dual-specificity RNA methyltransferase RlmN (341 aa).

The Proton acceptor role is filled by Glu-88. Positions 94-314 constitute a Radical SAM core domain; sequence EGDRATLCIS…ESHGFTCTIR (221 aa). A disulfide bridge links Cys-101 with Cys-325. [4Fe-4S] cluster contacts are provided by Cys-108, Cys-112, and Cys-115. Residues 153–154, Ser-185, 206–208, and His-282 each bind S-adenosyl-L-methionine; these read GE and SLH. Cys-325 serves as the catalytic S-methylcysteine intermediate.

Belongs to the radical SAM superfamily. RlmN family. The cofactor is [4Fe-4S] cluster.

The protein localises to the cytoplasm. It catalyses the reaction adenosine(2503) in 23S rRNA + 2 reduced [2Fe-2S]-[ferredoxin] + 2 S-adenosyl-L-methionine = 2-methyladenosine(2503) in 23S rRNA + 5'-deoxyadenosine + L-methionine + 2 oxidized [2Fe-2S]-[ferredoxin] + S-adenosyl-L-homocysteine. The catalysed reaction is adenosine(37) in tRNA + 2 reduced [2Fe-2S]-[ferredoxin] + 2 S-adenosyl-L-methionine = 2-methyladenosine(37) in tRNA + 5'-deoxyadenosine + L-methionine + 2 oxidized [2Fe-2S]-[ferredoxin] + S-adenosyl-L-homocysteine. Its function is as follows. Specifically methylates position 2 of adenine 2503 in 23S rRNA and position 2 of adenine 37 in tRNAs. This is Probable dual-specificity RNA methyltransferase RlmN from Porphyromonas gingivalis (strain ATCC BAA-308 / W83).